Reading from the N-terminus, the 365-residue chain is Hematopoietic SH2 domain-containing protein homolog (365 aa).

In terms of domain architecture, SH2 spans Trp-34–Cys-125. 2 disordered regions span residues Gln-199 to Pro-278 and Ala-335 to Tyr-365. Positions Gln-257–Lys-277 are enriched in polar residues.

May be an adapter protein involved in tyrosine kinase signaling. This Danio rerio (Zebrafish) protein is Hematopoietic SH2 domain-containing protein homolog (hsh2d).